Reading from the N-terminus, the 252-residue chain is NADP-dependent (R)-specific alcohol dehydrogenase (252 aa).

NADP(+)-binding positions include 16 to 19, 39 to 40, 63 to 64, asparagine 90, tyrosine 156, lysine 160, and 191 to 195; these read TLGI, RH, DA, and IKTPL. Tyrosine 156 (proton donor/acceptor) is an active-site residue. Residue glutamine 252 coordinates Mg(2+).

Belongs to the short-chain dehydrogenases/reductases (SDR) family. Homotetramer. Requires Mg(2+) as cofactor.

The enzyme catalyses a secondary alcohol + NADP(+) = a ketone + NADPH + H(+). It catalyses the reaction acetophenone + NADPH + H(+) = (R)-1-phenylethanol + NADP(+). The catalysed reaction is 2,5-hexanedione + 2 NADPH + 2 H(+) = (2R,5R)-hexanediol + 2 NADP(+). It carries out the reaction ethyl 3-oxobutanoate + NADPH + H(+) = ethyl (R)-3-hydroxybutanoate + NADP(+). The enzyme catalyses 2-octanone + NADPH + H(+) = (2R)-octan-2-ol + NADP(+). In terms of biological role, NADP-dependent (R)-specific alcohol dehydrogenase (ADH) with a broad substrate specificity, able to catalyze in vitro the stereoselective reduction of several aliphatic and aromatic ketones as well as beta-keto esters to the corresponding enantiomerically pure alcohols. This is NADP-dependent (R)-specific alcohol dehydrogenase from Lentilactobacillus kefiri (Lactobacillus kefiri).